A 246-amino-acid polypeptide reads, in one-letter code: uncharacterized protein (246 aa).

Position 10–34 (10–34 (VITGASSGIGEETVNLLSENGAKLV)) interacts with NADP(+). Residue S140 coordinates substrate. Y153 (proton acceptor) is an active-site residue.

Belongs to the short-chain dehydrogenases/reductases (SDR) family.

This is an uncharacterized protein from Staphylococcus saprophyticus subsp. saprophyticus (strain ATCC 15305 / DSM 20229 / NCIMB 8711 / NCTC 7292 / S-41).